The chain runs to 310 residues: Apolipoprotein E (310 aa).

The N-terminal stretch at 1 to 18 (MKVLWAALVVTLLAGCQA) is a signal peptide. A run of 4 repeats spans residues 77–98 (ALMEETMKEVKTYKAQLEQQLG), 99–120 (PTAQETQARVSKELQAAQARLG), 121–142 (ADMEDVRNRLVQYRSELQAMMG), and 143–164 (QSTEELRGRLNSHLRKLRKRLL). The tract at residues 77–248 (ALMEETMKEV…RLDEVREQVQ (172 aa)) is 8 X 22 AA approximate tandem repeats. A Methionine sulfoxide modification is found at Met-140. Residue Ser-144 is modified to Phosphoserine. Positions 155–165 (HLRKLRKRLLR) are LDL and other lipoprotein receptors binding. Residue 159 to 162 (LRKR) coordinates heparin. Positions 165-186 (RDAEDLQKRLAVYQAGIREGAE) form a repeat. 3 consecutive repeat copies span residues 187-204 (RSVNTLRERLRPLVEQAA), 205-226 (TVRSLISKPLQERAEAWGQRLR), and 227-248 (GRLEKVGTQAGDRLDEVREQVQ). The interval 203–283 (AATVRSLISK…SWFEPLVQDM (81 aa)) is lipid-binding and lipoprotein association. 222–229 (GQRLRGRL) contacts heparin. The segment at 259-310 (NQMRLQAEAFHARLKSWFEPLVQDMQQKWAELVEKVQLAVGTSPTSESSEKQ) is homooligomerization. Residues 271–283 (RLKSWFEPLVQDM) are specificity for association with VLDL.

This sequence belongs to the apolipoprotein A1/A4/E family. In terms of assembly, homotetramer. May interact with ABCA1; functionally associated with ABCA1 in the biogenesis of HDLs. May interact with APP/A4 amyloid-beta peptide; the interaction is extremely stable in vitro but its physiological significance is unclear. May interact with MAPT. May interact with MAP2. In the cerebrospinal fluid, interacts with secreted SORL1. Interacts with PMEL; this allows the loading of PMEL luminal fragment on ILVs to induce fibril nucleation. In terms of processing, APOE exists as multiple glycosylated and sialylated glycoforms within cells and in plasma. The extent of glycosylation and sialylation are tissue and context specific. Post-translationally, glycated in plasma VLDL. Phosphorylated by FAM20C in the extracellular medium.

The protein resides in the secreted. The protein localises to the extracellular space. Its subcellular location is the extracellular matrix. It localises to the extracellular vesicle. It is found in the endosome. The protein resides in the multivesicular body. APOE is an apolipoprotein, a protein associating with lipid particles, that mainly functions in lipoprotein-mediated lipid transport between organs via the plasma and interstitial fluids. APOE is a core component of plasma lipoproteins and is involved in their production, conversion and clearance. Apolipoproteins are amphipathic molecules that interact both with lipids of the lipoprotein particle core and the aqueous environment of the plasma. As such, APOE associates with chylomicrons, chylomicron remnants, very low density lipoproteins (VLDL) and intermediate density lipoproteins (IDL) but shows a preferential binding to high-density lipoproteins (HDL). It also binds a wide range of cellular receptors including the LDL receptor/LDLR, the LDL receptor-related proteins LRP1, LRP2 and LRP8 and the very low-density lipoprotein receptor/VLDLR that mediate the cellular uptake of the APOE-containing lipoprotein particles. Finally, APOE also has a heparin-binding activity and binds heparan-sulfate proteoglycans on the surface of cells, a property that supports the capture and the receptor-mediated uptake of APOE-containing lipoproteins by cells. A main function of APOE is to mediate lipoprotein clearance through the uptake of chylomicrons, VLDLs, and HDLs by hepatocytes. APOE is also involved in the biosynthesis by the liver of VLDLs as well as their uptake by peripheral tissues ensuring the delivery of triglycerides and energy storage in muscle, heart and adipose tissues. By participating in the lipoprotein-mediated distribution of lipids among tissues, APOE plays a critical role in plasma and tissues lipid homeostasis. APOE is also involved in two steps of reverse cholesterol transport, the HDLs-mediated transport of cholesterol from peripheral tissues to the liver, and thereby plays an important role in cholesterol homeostasis. First, it is functionally associated with ABCA1 in the biogenesis of HDLs in tissues. Second, it is enriched in circulating HDLs and mediates their uptake by hepatocytes. APOE also plays an important role in lipid transport in the central nervous system, regulating neuron survival and sprouting. The chain is Apolipoprotein E (APOE) from Tapirus terrestris (Lowland tapir).